A 279-amino-acid chain; its full sequence is MAIRKYKPTTPGLRGSSVADFAEITRSTPEKSLLRPLHKTGGRNNTGRITTRHKGGGHKRQYRLVDFRRHDKDGVPATVAHIEYDPNRTARIALLHYADGAKRYILAPAKLKQGDVVEAGPNADIKPGNNLPMRNIPVGTTIHAVELRPGGGAKMARSAGASVQLVAREGKYAQLRLPSGEIRNVDVRCRATIGEVGNAEQSNINWGKAGRMRWKGVRPTVRGVVMNPVDHPHGGGEGKTSGGRHPVNRNGKPEGRTRRPNKESDKLIVRRRRTGKNKR.

Disordered stretches follow at residues 34 to 58 (LRPLHKTGGRNNTGRITTRHKGGGH) and 225 to 279 (VMNP…KNKR). Basic and acidic residues predominate over residues 251–268 (GKPEGRTRRPNKESDKLI). Positions 269-279 (VRRRRTGKNKR) are enriched in basic residues.

Belongs to the universal ribosomal protein uL2 family. In terms of assembly, part of the 50S ribosomal subunit. Forms a bridge to the 30S subunit in the 70S ribosome.

Functionally, one of the primary rRNA binding proteins. Required for association of the 30S and 50S subunits to form the 70S ribosome, for tRNA binding and peptide bond formation. It has been suggested to have peptidyltransferase activity; this is somewhat controversial. Makes several contacts with the 16S rRNA in the 70S ribosome. The polypeptide is Large ribosomal subunit protein uL2 (Micrococcus luteus (strain ATCC 4698 / DSM 20030 / JCM 1464 / CCM 169 / CCUG 5858 / IAM 1056 / NBRC 3333 / NCIMB 9278 / NCTC 2665 / VKM Ac-2230) (Micrococcus lysodeikticus)).